A 484-amino-acid polypeptide reads, in one-letter code: Ribosomal RNA small subunit methyltransferase F (484 aa).

Residues 126–132, E150, D177, and D195 contribute to the S-adenosyl-L-methionine site; that span reads AAAPGSK. C248 (nucleophile) is an active-site residue.

The protein belongs to the class I-like SAM-binding methyltransferase superfamily. RsmB/NOP family.

The protein resides in the cytoplasm. It catalyses the reaction cytidine(1407) in 16S rRNA + S-adenosyl-L-methionine = 5-methylcytidine(1407) in 16S rRNA + S-adenosyl-L-homocysteine + H(+). In terms of biological role, specifically methylates the cytosine at position 1407 (m5C1407) of 16S rRNA. The polypeptide is Ribosomal RNA small subunit methyltransferase F (Pectobacterium carotovorum subsp. carotovorum (strain PC1)).